Consider the following 77-residue polypeptide: Exodeoxyribonuclease 7 small subunit (77 aa).

It belongs to the XseB family. In terms of assembly, heterooligomer composed of large and small subunits.

Its subcellular location is the cytoplasm. The enzyme catalyses Exonucleolytic cleavage in either 5'- to 3'- or 3'- to 5'-direction to yield nucleoside 5'-phosphates.. In terms of biological role, bidirectionally degrades single-stranded DNA into large acid-insoluble oligonucleotides, which are then degraded further into small acid-soluble oligonucleotides. The polypeptide is Exodeoxyribonuclease 7 small subunit (Alkaliphilus oremlandii (strain OhILAs) (Clostridium oremlandii (strain OhILAs))).